A 345-amino-acid polypeptide reads, in one-letter code: Serine proteinase inhibitor 2 (345 aa).

Belongs to the serpin family. Poxviruses subfamily.

It localises to the host cytoplasm. In terms of biological role, viral serpin that inhibits both cysteine and serine proteinases involved in the regulation of host inflammatory and apoptosis processes. Major anti-apoptotic protein which inhibits both intrinsic and extrinsic pathways and strongly cleaves host CASP1 and CASP8 but is a rather poor inhibitor of host CASP3. Prevents the proteolytic activity of host interleukin-1-beta converting enzyme (ICE) and ICE-like enzymes. Can also block apoptosis through host tumor necrosis factor (TNF) receptor. The inhibition of host ICE is an example of a 'cross-class' interaction, in which a serpin inhibits a non-serine proteinase. Also inhibits granzyme B. The sequence is that of Serine proteinase inhibitor 2 (OPG199) from Vaccinia virus (strain Western Reserve) (VACV).